The following is a 231-amino-acid chain: CLAVATA3/ESR (CLE)-related protein 4B-1 (231 aa).

The N-terminal stretch at 1-21 (MATNTMLCLLILSVVLALAFA) is a signal peptide. Residues 21-83 (ATNKKGDEEP…SNLLPNNNWM (63 aa)) form a required for secretion from the host cytoplasm to the host apoplasm region. Asn32 is a glycosylation site (N-linked (GlcNAc...) asparagine). The interval 116–231 (RKTGMHSQRH…APAGPDPIHH (116 aa)) is disordered. Basic and acidic residues-rich tracts occupy residues 125–137 (HHEE…EKRV) and 144–221 (PIHH…EKRG). The A-1 repeat unit spans residues 127-135 (EETTLEQEK). A 5 X approximate repeat A region spans residues 127–219 (EETTLEQEKR…HEETTFEQEK (93 aa)). One copy of the CLE-1 repeat lies at 136–147 (RVAGAGPDPIHH). The tract at residues 136–231 (RVAGAGPDPI…APAGPDPIHH (96 aa)) is 5 X approximate repeat CLE. One copy of the A-2 repeat lies at 148–156 (QDTTLEQEK). One copy of the CLE-2 repeat lies at 157–168 (RAVPAGPDPKHH). Residues 169–177 (EETTLEQEK) form an A-3 repeat. The stretch at 178 to 189 (RAVPAGPDPKHH) is one CLE-3 repeat. An A-4 repeat occupies 190–198 (EETTLEQEK). One copy of the CLE-4 repeat lies at 199 to 210 (RAVPAGPDPKHH). One copy of the A-5 repeat lies at 211-219 (EETTFEQEK). One copy of the CLE-5 repeat lies at 220-231 (RGAPAGPDPIHH).

This sequence belongs to the CLV3/ESR signal peptide family. In terms of tissue distribution, highly expressed exclusively within the dorsal esophageal gland cell during syncytium formation in host plants.

It is found in the secreted. The protein resides in the host cytoplasm. Its subcellular location is the host extracellular space. It localises to the extracellular space. The protein localises to the apoplast. Functionally, mimics host plant CLE extracellular signal peptides that regulate cell fate. May play a role in the differentiation or division of feeding cells (syncytia) induced in plant roots during infection. This Globodera rostochiensis (Golden nematode worm) protein is CLAVATA3/ESR (CLE)-related protein 4B-1 (CLE-4B-1).